The primary structure comprises 266 residues: Undecaprenyl-diphosphatase (266 aa).

The next 8 helical transmembrane spans lie at 1-21 (MDTF…FLPI), 39-59 (QGLS…VMYF), 87-107 (WWII…KGFI), 111-131 (FRSI…LWWA), 144-164 (VGWK…IPGT), 183-203 (AAAR…AILV), 218-238 (ALGL…HYFL), and 246-266 (MTPF…FIFL).

This sequence belongs to the UppP family.

The protein resides in the cell inner membrane. The catalysed reaction is di-trans,octa-cis-undecaprenyl diphosphate + H2O = di-trans,octa-cis-undecaprenyl phosphate + phosphate + H(+). Its function is as follows. Catalyzes the dephosphorylation of undecaprenyl diphosphate (UPP). Confers resistance to bacitracin. This chain is Undecaprenyl-diphosphatase, found in Shewanella halifaxensis (strain HAW-EB4).